We begin with the raw amino-acid sequence, 331 residues long: Ketol-acid reductoisomerase (NADP(+)) (331 aa).

A KARI N-terminal Rossmann domain is found at 2–181 (TKVYYEDAVK…GATRAGVIET (180 aa)). NADP(+) contacts are provided by residues 25 to 28 (YGSQ), Arg48, Ser52, and 82 to 85 (DETQ). The active site involves His107. Residue Gly133 coordinates NADP(+). A KARI C-terminal knotted domain is found at 182–327 (TFKEETETDL…AELREMMPFV (146 aa)). The Mg(2+) site is built by Asp190, Glu194, Glu226, and Glu230. Residue Ser251 coordinates substrate.

It belongs to the ketol-acid reductoisomerase family. The cofactor is Mg(2+).

The enzyme catalyses (2R)-2,3-dihydroxy-3-methylbutanoate + NADP(+) = (2S)-2-acetolactate + NADPH + H(+). It catalyses the reaction (2R,3R)-2,3-dihydroxy-3-methylpentanoate + NADP(+) = (S)-2-ethyl-2-hydroxy-3-oxobutanoate + NADPH + H(+). It functions in the pathway amino-acid biosynthesis; L-isoleucine biosynthesis; L-isoleucine from 2-oxobutanoate: step 2/4. Its pathway is amino-acid biosynthesis; L-valine biosynthesis; L-valine from pyruvate: step 2/4. Its function is as follows. Involved in the biosynthesis of branched-chain amino acids (BCAA). Catalyzes an alkyl-migration followed by a ketol-acid reduction of (S)-2-acetolactate (S2AL) to yield (R)-2,3-dihydroxy-isovalerate. In the isomerase reaction, S2AL is rearranged via a Mg-dependent methyl migration to produce 3-hydroxy-3-methyl-2-ketobutyrate (HMKB). In the reductase reaction, this 2-ketoacid undergoes a metal-dependent reduction by NADPH to yield (R)-2,3-dihydroxy-isovalerate. The sequence is that of Ketol-acid reductoisomerase (NADP(+)) from Listeria monocytogenes serovar 1/2a (strain ATCC BAA-679 / EGD-e).